The primary structure comprises 469 residues: Probable cobyric acid synthase (469 aa).

In terms of domain architecture, GATase cobBQ-type spans 241 to 427; that stretch reads SGSIGIVRYP…VHGILENNEF (187 aa). The active-site Nucleophile is the Cys319. Residue His419 is part of the active site.

Belongs to the CobB/CobQ family. CobQ subfamily.

It functions in the pathway cofactor biosynthesis; adenosylcobalamin biosynthesis. Catalyzes amidations at positions B, D, E, and G on adenosylcobyrinic A,C-diamide. NH(2) groups are provided by glutamine, and one molecule of ATP is hydrogenolyzed for each amidation. The polypeptide is Probable cobyric acid synthase (Picrophilus torridus (strain ATCC 700027 / DSM 9790 / JCM 10055 / NBRC 100828 / KAW 2/3)).